The following is a 376-amino-acid chain: Sulfate/thiosulfate import ATP-binding protein CysA 1 (376 aa).

An ABC transporter domain is found at 3–237; the sequence is IRLTNISKKF…PNSRFVFDFL (235 aa). Residue 35–42 coordinates ATP; it reads GPSGSGKT.

Belongs to the ABC transporter superfamily. Sulfate/tungstate importer (TC 3.A.1.6) family. The complex is composed of two ATP-binding proteins (CysA), two transmembrane proteins (CysT and CysW) and a solute-binding protein (CysP).

The protein localises to the cell inner membrane. The catalysed reaction is sulfate(out) + ATP + H2O = sulfate(in) + ADP + phosphate + H(+). The enzyme catalyses thiosulfate(out) + ATP + H2O = thiosulfate(in) + ADP + phosphate + H(+). Part of the ABC transporter complex CysAWTP involved in sulfate/thiosulfate import. Responsible for energy coupling to the transport system. The sequence is that of Sulfate/thiosulfate import ATP-binding protein CysA 1 from Shewanella oneidensis (strain ATCC 700550 / JCM 31522 / CIP 106686 / LMG 19005 / NCIMB 14063 / MR-1).